The primary structure comprises 365 residues: MQGFRNHRKLSLELTQPRLLVIGPNGIGKSNLLEAVELLGSLRSHRCSQDRDLIQWEAPRALLRAGLDDGDQLELELRRQGGRQARRNGKTLDRQLDLIGPLRCIGFSALDLELVRGEPALRRQWLDRVVLQLEPVYADLLGRYNRLLRQRSQLWRRGAQTNPNQRDALLDAFDVQMALVSTRIHRRRQRALRRLEPIARRWQSHLSAGSEELELHYQPGSRLDAEEAEEPWRLAIEEQLRLQRPEEERLGSCRVGPHRDEVSLQLGGTPARRFGSSGQQRSLVLGLKLAELELVTQLFGEAPLLLLDDVLAELDPTRQHLLLEAVGQEHQCLVSATHLSGFEGGWREHSQILKPGDLSPGVEIG.

23–30 provides a ligand contact to ATP; sequence GPNGIGKS.

It belongs to the RecF family.

The protein resides in the cytoplasm. In terms of biological role, the RecF protein is involved in DNA metabolism; it is required for DNA replication and normal SOS inducibility. RecF binds preferentially to single-stranded, linear DNA. It also seems to bind ATP. This is DNA replication and repair protein RecF from Parasynechococcus marenigrum (strain WH8102).